The primary structure comprises 5088 residues: Replicase polyprotein 1ab (5088 aa).

The helical transmembrane segment at 26–46 (VTNVIQYWTPILTMLLLAIYI) threads the bilayer. A disordered region spans residues 301-323 (EIEDDTEAEETQKTKRKGKLQPQ). Helical transmembrane passes span 343–363 (HLTF…MSPT), 1132–1152 (GLFL…AITI), 1156–1176 (TMMM…HLLL), 1201–1221 (YGCL…LAYI), and 1250–1270 (ILIP…VSYV). Residues His1434 and Cys1539 each act as for 3C-like proteinase in the active site. Helical transmembrane passes span 1729–1749 (FTHT…LFFV) and 1758–1778 (ILSS…YGLV). The interval 3093-3112 (KPNCPMVPSEVPVRNKHKSA) is disordered. Residues 4351–4616 (MNIVMDDCIC…MTQCIYQSFV (266 aa)) enclose the ExoN domain. Active-site residues include Asp4362, Glu4364, and Asp4481. Residues Cys4498, Cys4504, Cys4522, and His4525 each contribute to the Zn(2+) site. Catalysis depends on residues His4599, Asp4604, Lys4880, Asp4969, Lys4998, and Glu5035. Residues 4844–5088 (LNNHAALAKA…RQSVFRYSPK (245 aa)) enclose the Nidovirus-type SAM-dependent 2'-O-MTase domain.

As to quaternary structure, homodimer. Post-translationally, specific enzymatic cleavages in vivo by its own protease yield mature proteins. 3CL-PRO is autocatalytically processed.

It is found in the membrane. It catalyses the reaction a 5'-end (5'-triphosphoguanosine)-ribonucleoside in mRNA + S-adenosyl-L-methionine = a 5'-end (N(7)-methyl 5'-triphosphoguanosine)-ribonucleoside in mRNA + S-adenosyl-L-homocysteine. The enzyme catalyses RNA(n) + a ribonucleoside 5'-triphosphate = RNA(n+1) + diphosphate. The catalysed reaction is ATP + H2O = ADP + phosphate + H(+). It carries out the reaction a 5'-end (N(7)-methyl 5'-triphosphoguanosine)-ribonucleoside in mRNA + S-adenosyl-L-methionine = a 5'-end (N(7)-methyl 5'-triphosphoguanosine)-(2'-O-methyl-ribonucleoside) in mRNA + S-adenosyl-L-homocysteine + H(+). In terms of biological role, cysteine protease responsible for the majority of cleavages of the polyprotein. Recognizes substrates containing the core sequence [NT]-[EHKQSY]-|-[AGNST]. Its function is as follows. The helicase which contains a zinc finger structure displays RNA and DNA duplex-unwinding activities with 5' to 3' polarity. RNA-directed RNA polymerase that catalyzes the transcription of viral genomic and subgenomic RNAs. Functionally, catalyzes the RNA N7-guanylyltransferase reaction to methylate the core cap structure GpppN-RNA into the type-0 cap (m)GpppN-RNA. This chain is Replicase polyprotein 1ab, found in Ochlerotatus harrisoni (CAVV).